Consider the following 389-residue polypeptide: Chaperone protein DnaJ (389 aa).

In terms of domain architecture, J spans Lys-5 to Glu-79. Residues Gly-151 to Asn-234 form a CR-type zinc finger. Positions 164, 167, 182, 185, 208, 211, 222, and 225 each coordinate Zn(2+). CXXCXGXG motif repeat units lie at residues Cys-164 to Gly-171, Cys-182 to Gly-189, Cys-208 to Gly-215, and Cys-222 to Lys-229.

This sequence belongs to the DnaJ family. As to quaternary structure, homodimer. The cofactor is Zn(2+).

It is found in the cytoplasm. In terms of biological role, participates actively in the response to hyperosmotic and heat shock by preventing the aggregation of stress-denatured proteins and by disaggregating proteins, also in an autonomous, DnaK-independent fashion. Unfolded proteins bind initially to DnaJ; upon interaction with the DnaJ-bound protein, DnaK hydrolyzes its bound ATP, resulting in the formation of a stable complex. GrpE releases ADP from DnaK; ATP binding to DnaK triggers the release of the substrate protein, thus completing the reaction cycle. Several rounds of ATP-dependent interactions between DnaJ, DnaK and GrpE are required for fully efficient folding. Also involved, together with DnaK and GrpE, in the DNA replication of plasmids through activation of initiation proteins. The protein is Chaperone protein DnaJ of Mycoplasma genitalium (strain ATCC 33530 / DSM 19775 / NCTC 10195 / G37) (Mycoplasmoides genitalium).